The chain runs to 623 residues: Sphingomyelinase C 2 (623 aa).

The first 25 residues, 1 to 25 (MINKITKPKLLIGYYLLLFSLIRCL), serve as a signal peptide directing secretion. Low complexity-rich tracts occupy residues 51–61 (VNSVSINNDPA) and 67–80 (NPAS…NAVP). The segment at 51 to 121 (VNSVSINNDP…DPNPANLASA (71 aa)) is disordered. Residues 89 to 102 (NPVNPASANSNQVN) are compositionally biased toward polar residues. Over residues 110–121 (PADPNPANLASA) the composition is skewed to low complexity.

It is found in the secreted. It carries out the reaction a sphingomyelin + H2O = phosphocholine + an N-acylsphing-4-enine + H(+). This chain is Sphingomyelinase C 2 (sph2), found in Leptospira interrogans serogroup Icterohaemorrhagiae serovar Lai (strain 56601).